A 227-amino-acid polypeptide reads, in one-letter code: Cytochrome c oxidase subunit 2 (227 aa).

Residues 1-14 (MAHSFQLGFQDATS) lie on the Mitochondrial intermembrane side of the membrane. The chain crosses the membrane as a helical span at residues 15-45 (PIMEELLHFHDHTLMIVFLISSLVLYIITLM). Topologically, residues 46–59 (LTTKLTHTSTMDAQ) are mitochondrial matrix. The chain crosses the membrane as a helical span at residues 60-87 (EVETVWTILPAIILILIALPSLRILYLM). Residues 88–227 (DEINTPSLTV…HFENWSTSMI (140 aa)) lie on the Mitochondrial intermembrane side of the membrane. Positions 161, 196, 198, 200, 204, and 207 each coordinate Cu cation. E198 is a Mg(2+) binding site.

Belongs to the cytochrome c oxidase subunit 2 family. Component of the cytochrome c oxidase (complex IV, CIV), a multisubunit enzyme composed of 14 subunits. The complex is composed of a catalytic core of 3 subunits MT-CO1, MT-CO2 and MT-CO3, encoded in the mitochondrial DNA, and 11 supernumerary subunits COX4I, COX5A, COX5B, COX6A, COX6B, COX6C, COX7A, COX7B, COX7C, COX8 and NDUFA4, which are encoded in the nuclear genome. The complex exists as a monomer or a dimer and forms supercomplexes (SCs) in the inner mitochondrial membrane with NADH-ubiquinone oxidoreductase (complex I, CI) and ubiquinol-cytochrome c oxidoreductase (cytochrome b-c1 complex, complex III, CIII), resulting in different assemblies (supercomplex SCI(1)III(2)IV(1) and megacomplex MCI(2)III(2)IV(2)). Found in a complex with TMEM177, COA6, COX18, COX20, SCO1 and SCO2. Interacts with TMEM177 in a COX20-dependent manner. Interacts with COX20. Interacts with COX16. Requires Cu cation as cofactor.

The protein resides in the mitochondrion inner membrane. It catalyses the reaction 4 Fe(II)-[cytochrome c] + O2 + 8 H(+)(in) = 4 Fe(III)-[cytochrome c] + 2 H2O + 4 H(+)(out). Functionally, component of the cytochrome c oxidase, the last enzyme in the mitochondrial electron transport chain which drives oxidative phosphorylation. The respiratory chain contains 3 multisubunit complexes succinate dehydrogenase (complex II, CII), ubiquinol-cytochrome c oxidoreductase (cytochrome b-c1 complex, complex III, CIII) and cytochrome c oxidase (complex IV, CIV), that cooperate to transfer electrons derived from NADH and succinate to molecular oxygen, creating an electrochemical gradient over the inner membrane that drives transmembrane transport and the ATP synthase. Cytochrome c oxidase is the component of the respiratory chain that catalyzes the reduction of oxygen to water. Electrons originating from reduced cytochrome c in the intermembrane space (IMS) are transferred via the dinuclear copper A center (CU(A)) of subunit 2 and heme A of subunit 1 to the active site in subunit 1, a binuclear center (BNC) formed by heme A3 and copper B (CU(B)). The BNC reduces molecular oxygen to 2 water molecules using 4 electrons from cytochrome c in the IMS and 4 protons from the mitochondrial matrix. The polypeptide is Cytochrome c oxidase subunit 2 (MT-CO2) (Cephalopachus bancanus (Western tarsier)).